We begin with the raw amino-acid sequence, 223 residues long: DNA replication complex GINS protein SLD5 (223 aa).

M1 is subject to N-acetylmethionine. Phosphoserine is present on residues S12 and S16. The important for GINS complex assembly stretch occupies residues 166–223 (DLDAYVFLRVKERQENILVEPENDEQRDYVIDLEEGSQHLMRYRTVAPLVASGAIQLI).

It belongs to the GINS4/SLD5 family. As to quaternary structure, component of the CMG helicase complex, a hexameric ring of related MCM2-7 subunits stabilized by CDC45 and the tetrameric GINS complex. Associated with ORC2. Interacts with HELB.

It is found in the nucleus. It localises to the chromosome. Its function is as follows. Required for initiation of chromosomal DNA replication. Core component of CDC45-MCM-GINS (CMG) helicase, the molecular machine that unwinds template DNA during replication, and around which the replisome is built. The polypeptide is DNA replication complex GINS protein SLD5 (GINS4) (Bos taurus (Bovine)).